Reading from the N-terminus, the 389-residue chain is Putative zinc finger CCCH domain-containing protein 10 (389 aa).

Residues 1-11 show a composition bias toward polar residues; it reads MANVSFTFDSQ. The tract at residues 1–110 is disordered; it reads MANVSFTFDS…QDRRGSESRM (110 aa). Composition is skewed to basic and acidic residues over residues 12–52 and 86–110; these read EQNK…RVSE and RSHE…ESRM. 2 C3H1-type zinc fingers span residues 131-157 and 158-190; these read RPGE…YNHP and PLQE…HPKE. The tract at residues 183–296 is disordered; sequence CPFNHPKERD…ATATGKVSGK (114 aa). 2 stretches are compositionally biased toward basic and acidic residues: residues 204 to 243 and 251 to 284; these read PDLR…KEDA and RPRD…RSSR.

The protein is Putative zinc finger CCCH domain-containing protein 10 of Arabidopsis thaliana (Mouse-ear cress).